A 111-amino-acid polypeptide reads, in one-letter code: DNA-directed RNA polymerase subunit Rpo11 (111 aa).

This sequence belongs to the archaeal Rpo11/eukaryotic RPB11/RPC19 RNA polymerase subunit family. Part of the RNA polymerase complex.

It is found in the cytoplasm. The catalysed reaction is RNA(n) + a ribonucleoside 5'-triphosphate = RNA(n+1) + diphosphate. In terms of biological role, DNA-dependent RNA polymerase (RNAP) catalyzes the transcription of DNA into RNA using the four ribonucleoside triphosphates as substrates. This is DNA-directed RNA polymerase subunit Rpo11 from Thermoplasma volcanium (strain ATCC 51530 / DSM 4299 / JCM 9571 / NBRC 15438 / GSS1).